Consider the following 535-residue polypeptide: INSYN2B protein (535 aa).

Disordered regions lie at residues L23 to R85, E215 to S346, and K360 to E387. Over residues K46–P59 the composition is skewed to polar residues. Residues S219–S232 are compositionally biased toward low complexity. 3 stretches are compositionally biased toward polar residues: residues C258 to P269, R307 to Q319, and L361 to G375. Residues D411–E448 are a coiled coil. Residues L493 to K528 are disordered.

The protein belongs to the INSYN2 family.

The protein is INSYN2B protein (Insyn2b) of Mus musculus (Mouse).